The sequence spans 162 residues: V-type proton ATPase subunit c' (162 aa).

Topologically, residues 1–11 are lumenal; sequence MSSNLCPIYSS. Residues 12–32 form a helical membrane-spanning segment; the sequence is FFGFAGVCASMVFSCLGAGYG. The Cytoplasmic portion of the chain corresponds to 33 to 54; the sequence is TALAGRGIAAVGAFRPEIVMKS. A helical membrane pass occupies residues 55–75; that stretch reads LIPVVMSGIIGVYGLVMSVLI. Over 76–93 the chain is Lumenal; sequence AGDMSPDNDYSLFSGFIH. The helical transmembrane segment at 94-114 threads the bilayer; sequence LSAGLAVGLTGVAAGYAIGVV. Residues 115 to 132 are Cytoplasmic-facing; that stretch reads GDRGVQSFMRQDRIFVSM. The helical transmembrane segment at 133 to 153 threads the bilayer; the sequence is VLILIFAEVLGLYGLIVGLIL. Over 154-162 the chain is Lumenal; it reads QTKTSNVCY.

This sequence belongs to the V-ATPase proteolipid subunit family. V-ATPase is a heteromultimeric enzyme composed of a peripheral catalytic V1 complex (components A to H) attached to an integral membrane V0 proton pore complex (components: a, c, c', c'', d, e, f and VOA1). The decameric c-ring forms the proton-conducting pore, and is composed of eight proteolipid subunits c, one subunit c' and one subunit c''.

It localises to the vacuole membrane. Functionally, proton-conducting pore forming subunit of the V0 complex of vacuolar(H+)-ATPase (V-ATPase), a multisubunit enzyme composed of a peripheral complex (V1) that hydrolyzes ATP and a membrane integral complex (V0) that translocates protons. V-ATPase is responsible for acidifying and maintaining the pH of intracellular compartments. This is V-type proton ATPase subunit c' from Schizosaccharomyces pombe (strain 972 / ATCC 24843) (Fission yeast).